Reading from the N-terminus, the 228-residue chain is HTH-type transcriptional regulator ArcR (228 aa).

An a nucleoside 3',5'-cyclic phosphate-binding site is contributed by 22–141 (SYINIPVGVL…VKLFSLLSET (120 aa)). Residues 155–228 (KLAKERVTKI…SKNWLVSKDL (74 aa)) form the HTH crp-type domain. Residues 188 to 207 (IQLLSDMAGISRETTSHIIN) constitute a DNA-binding region (H-T-H motif).

It localises to the cytoplasm. In terms of biological role, positively regulates the expression of the arcABDCR operon under anaerobic conditions, thus playing an essential role in arginine catabolism. May also control the expression of genes encoding proteins which are involved in anaerobic metabolism. Can bind cyclic AMP. This is HTH-type transcriptional regulator ArcR (arcR) from Staphylococcus epidermidis (strain ATCC 35984 / DSM 28319 / BCRC 17069 / CCUG 31568 / BM 3577 / RP62A).